The sequence spans 399 residues: MAQRAFPNPYADYNKSLAENYFDSTGRLTPEFSHRLTNKIRELLQQMERGLKSADPQDGTGYTGWAGIAVLYLHLHNVFGDPAYLQMAHSYVKHSLNCLSRRSITFLCGDAGPLAVAAVLYHKMNSGKQAEDCITRLIHLNKIDPHVPNEMLYGRIGYIFALLFVNKNFGEEKIPQSHIQQICETILTSGEKLSRKRNFTTKSPLMYEWYQEYYVGAAHGLAGIYYYLMQPSLHVSQGKLHSLVKPSVDFVCQLKFPSGNYPSCLDDTRDLLVHWCHGAPGVIYMLIQAYKVFKEEHYLCDAQQCADVIWQYGLLKKGYGLCHGAAGNAYAFLALYNLTQDAKYLYRACKFAEWCLDYGEHGCRTPDTPFSLFEGMAGTIYFLADLLVPTKAKFPAFEL.

The residue at position 2 (Ala2) is an N-acetylalanine. At Lys142 the chain carries N6-acetyllysine. Residue Cys276 participates in Zn(2+) binding. Lys317 lines the glutathione pocket. Zn(2+) contacts are provided by Cys322 and His323. 364–367 (RTPD) serves as a coordination point for glutathione.

It belongs to the LanC-like protein family. As to quaternary structure, interacts with the C-terminal of STOM. Interacts with the EPS8 SH3 domain. Interaction with EPS8 is inhibited by glutathione binding. Strongly expressed in the brain, testis and skeletal muscle. Expressed in the neurons of the cerebellum, the germinal cells of the seminiferous tubules in testis, in liver hepoatocytes and in cardiac myocytes.

Its subcellular location is the cytoplasm. The protein localises to the cell membrane. It catalyses the reaction RX + glutathione = an S-substituted glutathione + a halide anion + H(+). The catalysed reaction is 1-chloro-2,4-dinitrobenzene + glutathione = 2,4-dinitrophenyl-S-glutathione + chloride + H(+). Functionally, functions as a glutathione transferase. Catalyzes conjugation of the glutathione (GSH) to artificial substrates 1-chloro-2,4-dinitrobenzene (CDNB) and p-nitrophenyl acetate. Mitigates neuronal oxidative stress during normal postnatal development and in response to oxidative stresses probably through GSH antioxidant defense mechanism. May play a role in EPS8 signaling. Binds glutathione. The sequence is that of Glutathione S-transferase LANCL1 from Rattus norvegicus (Rat).